Here is a 156-residue protein sequence, read N- to C-terminus: Flagellar assembly factor FliW (156 aa).

The protein belongs to the FliW family. As to quaternary structure, interacts with translational regulator CsrA and flagellin(s).

The protein resides in the cytoplasm. In terms of biological role, acts as an anti-CsrA protein, binds CsrA and prevents it from repressing translation of its target genes, one of which is flagellin. Binds to flagellin and participates in the assembly of the flagellum. In Syntrophomonas wolfei subsp. wolfei (strain DSM 2245B / Goettingen), this protein is Flagellar assembly factor FliW.